Reading from the N-terminus, the 557-residue chain is Aspartate--tRNA ligase (557 aa).

Glutamate 168 lines the L-aspartate pocket. An aspartate region spans residues 192–195 (QIYK). L-aspartate is bound at residue arginine 214. ATP contacts are provided by residues 214–216 (RDE) and glutamine 223. Histidine 423 is a binding site for L-aspartate. Glutamate 457 contacts ATP. Arginine 464 contributes to the L-aspartate binding site. Position 505 to 508 (505 to 508 (GLDR)) interacts with ATP.

It belongs to the class-II aminoacyl-tRNA synthetase family. Type 1 subfamily. Homodimer.

It is found in the cytoplasm. The enzyme catalyses tRNA(Asp) + L-aspartate + ATP = L-aspartyl-tRNA(Asp) + AMP + diphosphate. Catalyzes the attachment of L-aspartate to tRNA(Asp) in a two-step reaction: L-aspartate is first activated by ATP to form Asp-AMP and then transferred to the acceptor end of tRNA(Asp). The protein is Aspartate--tRNA ligase of Mycoplasma pneumoniae (strain ATCC 29342 / M129 / Subtype 1) (Mycoplasmoides pneumoniae).